The primary structure comprises 321 residues: CRISPR-associated aCascade subunit Cas7/Csa2 2 (321 aa).

Belongs to the CRISPR-associated protein Cas7/Cst2/DevR family. Subtype I-a/Apern subfamily. In terms of assembly, part of the aCascade ribonucleoprotein complex, minimally composed of Csa2 and Cas5a, which binds crRNA. Other possible components of aCascade in strain P1 are Cas6b (SSO1437) and Csa5 (SSO1443), while SSO1399, Cas5b (SSO1400) and SSO1401 have sometimes been seen weakly associated. Csa2 is probably the major RNA-binding subunit. The Csa2-Cas5a-crRNA complex also binds target DNA homologous to crRNA, probably forming an R-loop. Purified aCascade forms a filament about 6 nm in width.

Functionally, CRISPR (clustered regularly interspaced short palindromic repeat) is an adaptive immune system that provides protection against mobile genetic elements (viruses, transposable elements and conjugative plasmids). CRISPR clusters contain spacers, sequences complementary to antecedent mobile elements, and target invading nucleic acids. CRISPR clusters are transcribed and processed into CRISPR RNA (crRNA). This chain is CRISPR-associated aCascade subunit Cas7/Csa2 2 (csa2b), found in Saccharolobus solfataricus (strain ATCC 35092 / DSM 1617 / JCM 11322 / P2) (Sulfolobus solfataricus).